We begin with the raw amino-acid sequence, 239 residues long: 4-hydroxy-tetrahydrodipicolinate reductase (239 aa).

NAD(+) contacts are provided by residues 9–14 (GINGKM), 78–80 (GTT), and 104–107 (APNF). Histidine 134 functions as the Proton donor/acceptor in the catalytic mechanism. Histidine 135 contributes to the (S)-2,3,4,5-tetrahydrodipicolinate binding site. Lysine 138 serves as the catalytic Proton donor. Residue 144 to 145 (GT) coordinates (S)-2,3,4,5-tetrahydrodipicolinate.

This sequence belongs to the DapB family.

The protein localises to the cytoplasm. The catalysed reaction is (S)-2,3,4,5-tetrahydrodipicolinate + NAD(+) + H2O = (2S,4S)-4-hydroxy-2,3,4,5-tetrahydrodipicolinate + NADH + H(+). It catalyses the reaction (S)-2,3,4,5-tetrahydrodipicolinate + NADP(+) + H2O = (2S,4S)-4-hydroxy-2,3,4,5-tetrahydrodipicolinate + NADPH + H(+). It participates in amino-acid biosynthesis; L-lysine biosynthesis via DAP pathway; (S)-tetrahydrodipicolinate from L-aspartate: step 4/4. Catalyzes the conversion of 4-hydroxy-tetrahydrodipicolinate (HTPA) to tetrahydrodipicolinate. The protein is 4-hydroxy-tetrahydrodipicolinate reductase of Coxiella burnetii (strain Dugway 5J108-111).